The chain runs to 69 residues: Snake venom metalloproteinase BnP2 (69 aa).

Residues 1–69 (YIELAVVADH…EWRERDIIPR (69 aa)) form the Peptidase M12B domain. Glutamate 3 is a Ca(2+) binding site.

This sequence belongs to the venom metalloproteinase (M12B) family. P-I subfamily. Monomer. Zn(2+) is required as a cofactor. As to expression, expressed by the venom gland.

The protein resides in the secreted. With respect to regulation, inhibited by EDTA. In terms of biological role, this protein is a zinc protease from snake venom that is devoid of significant myotoxic and hemorrhagic activities. It hydrolyzes the Aalpha-chain and more slowly the Bbeta-chain of fibrin and fibrinogen, without affecting the gamma-chains. It induces cell detachment and a apoptosis (anoikis) in endothelial cells. The chain is Snake venom metalloproteinase BnP2 from Bothrops pauloensis (Neuwied's lancehead).